We begin with the raw amino-acid sequence, 251 residues long: uncharacterized protein (251 aa).

A divalent metal cation is bound by residues His-6, His-8, Glu-90, His-130, His-154, and Asp-202.

It belongs to the metallo-dependent hydrolases superfamily. TatD-type hydrolase family. A divalent metal cation is required as a cofactor.

This is an uncharacterized protein from Haemophilus influenzae (strain ATCC 51907 / DSM 11121 / KW20 / Rd).